Reading from the N-terminus, the 327-residue chain is 2-methoxy-6-polyprenyl-1,4-benzoquinol methylase, mitochondrial (327 aa).

A mitochondrion-targeting transit peptide spans 1 to 49 (MAAPRSCVLWSYCGHGWSRLAGDCRLPGFRRSWLGATLSARSLSQEKRA). S-adenosyl-L-methionine-binding positions include T117, D171, and 199-200 (DA).

This sequence belongs to the class I-like SAM-binding methyltransferase superfamily. MenG/UbiE family. Component of a multi-subunit COQ enzyme complex, composed of at least COQ3, COQ4, COQ5, COQ6, COQ7 and COQ9. Interacts with PYURF; the interaction is direct, stabilizes COQ5 protein and associates PYURF with COQ enzyme complex.

Its subcellular location is the mitochondrion inner membrane. The catalysed reaction is 2-methoxy-6-(all-trans-decaprenyl)benzene-1,4-diol + S-adenosyl-L-methionine = 5-methoxy-2-methyl-3-(all-trans-decaprenyl)benzene-1,4-diol + S-adenosyl-L-homocysteine + H(+). It participates in cofactor biosynthesis; ubiquinone biosynthesis. Its function is as follows. Methyltransferase required for the conversion of 2-decaprenyl-6-methoxy-1,4-benzoquinol (DDMQH2) to 2-decaprenyl-3-methyl-6-methoxy-1,4-benzoquinol (DMQH2). The chain is 2-methoxy-6-polyprenyl-1,4-benzoquinol methylase, mitochondrial from Rattus norvegicus (Rat).